Consider the following 604-residue polypeptide: MKQDSRNLYLAIGLSLLVLIGWNYFFAGPQVEKARQAQIVREQQAQTQTTSDTTARSDLNVPGQRSLPGESPQTQLSRPEALAASPRVKLDTPNLFGSINLRGARIDDVSLKAYRETVAKDSPNIVLLSPSGTPAPYYADAGFVAPAEAGLLLPKSDTLWSADREVLTPEAPVTLTYDNGQGLIFHRTISVDDRFMFTLTDKVENKTDKPVTLYPYSLVSRHGRPVTAGYAVLHEGMVGVIGDNGLQEITYDKIHKEENATKSFKGTGGWLGFTDKYWAAVIAPDQATPFEGRFSERGTTTPLYQTDALGPALTIAPGGTGGDMSRLFAGAKETQTLDDYRNELGIKKFDLLIDWGYFYFITRPMFWILHTIYQVVGNFGVAILCITVLVKAVFFPLANRSYLSMAKMKAIQPQMLALRERYADDKVKQQQELMELYKREKINPVAGCLPMLIQIPVFFALYKVLFVTIEMRQAPFFGWIRDLSAPDPTNIFNLFGLLPFDPTHLPMIGHFLAIGIWPLIMGVSMFFQMKMNPEPADPVQKQMFSWMPVIFTFMLGTFPSGLVIYWTWNNTLSVLQQSLIMKRAGVKVELWDNLMSTFRKKAVT.

Residues 8–28 (LYLAIGLSLLVLIGWNYFFAG) form a helical membrane-spanning segment. The disordered stretch occupies residues 42–84 (EQQAQTQTTSDTTARSDLNVPGQRSLPGESPQTQLSRPEALAA). Residues 43–58 (QQAQTQTTSDTTARSD) show a composition bias toward low complexity. A run of 5 helical transmembrane segments spans residues 349 to 369 (FDLLIDWGYFYFITRPMFWIL), 375 to 395 (VVGNFGVAILCITVLVKAVFF), 449 to 469 (LPMLIQIPVFFALYKVLFVTI), 507 to 527 (MIGHFLAIGIWPLIMGVSMFF), and 546 to 566 (WMPVIFTFMLGTFPSGLVIYW).

This sequence belongs to the OXA1/ALB3/YidC family. Type 1 subfamily. In terms of assembly, interacts with the Sec translocase complex via SecD. Specifically interacts with transmembrane segments of nascent integral membrane proteins during membrane integration.

It localises to the cell inner membrane. Its function is as follows. Required for the insertion and/or proper folding and/or complex formation of integral membrane proteins into the membrane. Involved in integration of membrane proteins that insert both dependently and independently of the Sec translocase complex, as well as at least some lipoproteins. Aids folding of multispanning membrane proteins. The sequence is that of Membrane protein insertase YidC from Beijerinckia indica subsp. indica (strain ATCC 9039 / DSM 1715 / NCIMB 8712).